A 185-amino-acid chain; its full sequence is Elongation factor P (185 aa).

This sequence belongs to the elongation factor P family.

The protein localises to the cytoplasm. It participates in protein biosynthesis; polypeptide chain elongation. Functionally, involved in peptide bond synthesis. Stimulates efficient translation and peptide-bond synthesis on native or reconstituted 70S ribosomes in vitro. Probably functions indirectly by altering the affinity of the ribosome for aminoacyl-tRNA, thus increasing their reactivity as acceptors for peptidyl transferase. This chain is Elongation factor P, found in Desulfitobacterium hafniense (strain Y51).